We begin with the raw amino-acid sequence, 156 residues long: Small ribosomal subunit protein uS7c (156 aa).

Belongs to the universal ribosomal protein uS7 family. In terms of assembly, part of the 30S ribosomal subunit.

It localises to the plastid. Its subcellular location is the chloroplast. One of the primary rRNA binding proteins, it binds directly to 16S rRNA where it nucleates assembly of the head domain of the 30S subunit. The protein is Small ribosomal subunit protein uS7c (rps7) of Pisum sativum (Garden pea).